Consider the following 211-residue polypeptide: Proteasome subunit beta 2 (211 aa).

Residues Met1–Gly17 constitute a propeptide, removed in mature form; by autocatalysis. The active-site Nucleophile is Thr18.

It belongs to the peptidase T1B family. In terms of assembly, the 20S proteasome core is composed of 14 alpha and 14 beta subunits that assemble into four stacked heptameric rings, resulting in a barrel-shaped structure. The two inner rings, each composed of seven catalytic beta subunits, are sandwiched by two outer rings, each composed of seven alpha subunits. The catalytic chamber with the active sites is on the inside of the barrel. Has a gated structure, the ends of the cylinder being occluded by the N-termini of the alpha-subunits. Is capped at one or both ends by the proteasome regulatory ATPase, PAN.

The protein localises to the cytoplasm. It carries out the reaction Cleavage of peptide bonds with very broad specificity.. The formation of the proteasomal ATPase PAN-20S proteasome complex, via the docking of the C-termini of PAN into the intersubunit pockets in the alpha-rings, triggers opening of the gate for substrate entry. Interconversion between the open-gate and close-gate conformations leads to a dynamic regulation of the 20S proteasome proteolysis activity. In terms of biological role, component of the proteasome core, a large protease complex with broad specificity involved in protein degradation. The sequence is that of Proteasome subunit beta 2 from Saccharolobus solfataricus (strain 98/2) (Sulfolobus solfataricus).